A 312-amino-acid chain; its full sequence is Lipid-translocating exporter-like protein RTA1 (312 aa).

Positions 1–21 (MSPESKKITAHGSTSMPLSRT) are disordered. Residues 11-21 (HGSTSMPLSRT) show a composition bias toward polar residues. Helical transmembrane passes span 29–49 (IPLT…FFLA), 61–81 (LSTM…YFIC), 103–123 (FITF…LLAG), 142–162 (AMIT…SFHV), 183–203 (FMMV…RSAY), and 223–243 (SLML…ILPI). Asparagine 258 and asparagine 304 each carry an N-linked (GlcNAc...) asparagine glycan.

This sequence belongs to the lipid-translocating exporter (LTE) (TC 9.A.26.1) family.

It is found in the membrane. It functions in the pathway siderophore biosynthesis. Its function is as follows. Lipid-translocating exporter-like protein; part of the gene cluster that mediates the biosynthesis of hydroxamate-containing siderophores that play a critical role in virulence via intracellular iron acquisition during macrophage infection. The polypeptide is Lipid-translocating exporter-like protein RTA1 (Ajellomyces capsulatus (Darling's disease fungus)).